Here is a 270-residue protein sequence, read N- to C-terminus: 3-phenylpropionate-dihydrodiol/cinnamic acid-dihydrodiol dehydrogenase (270 aa).

10 to 34 (FITGGGSGLGLALVERFIEKGAQVA) contributes to the NAD(+) binding site. Residue Ser143 coordinates substrate. The active-site Proton acceptor is Tyr156.

It belongs to the short-chain dehydrogenases/reductases (SDR) family.

The enzyme catalyses 3-(cis-5,6-dihydroxycyclohexa-1,3-dien-1-yl)propanoate + NAD(+) = 3-(2,3-dihydroxyphenyl)propanoate + NADH + H(+). It carries out the reaction (2E)-3-(cis-5,6-dihydroxycyclohexa-1,3-dien-1-yl)prop-2-enoate + NAD(+) = (2E)-3-(2,3-dihydroxyphenyl)prop-2-enoate + NADH + H(+). It participates in aromatic compound metabolism; 3-phenylpropanoate degradation. Its function is as follows. Converts 3-phenylpropionate-dihydrodiol (PP-dihydrodiol) and cinnamic acid-dihydrodiol (CI-dihydrodiol) into 3-(2,3-dihydroxylphenyl)propanoic acid (DHPP) and 2,3-dihydroxicinnamic acid (DHCI), respectively. In Escherichia coli, this protein is 3-phenylpropionate-dihydrodiol/cinnamic acid-dihydrodiol dehydrogenase (hcaB).